We begin with the raw amino-acid sequence, 508 residues long: Cobalamin biosynthesis protein CobIJ (508 aa).

The segment at M1–A243 is precorrin-2 C20-methyltransferase. The interval L244–D508 is precorrin-3 methylase. Residues P489 to D508 form a disordered region.

Belongs to the precorrin methyltransferase family.

It carries out the reaction precorrin-2 + S-adenosyl-L-methionine = precorrin-3A + S-adenosyl-L-homocysteine + H(+). It catalyses the reaction precorrin-3B + S-adenosyl-L-methionine = precorrin-4 + S-adenosyl-L-homocysteine + 3 H(+). The protein operates within cofactor biosynthesis; adenosylcobalamin biosynthesis; cob(II)yrinate a,c-diamide from precorrin-2 (aerobic route): step 1/10. It participates in cofactor biosynthesis; adenosylcobalamin biosynthesis; cob(II)yrinate a,c-diamide from precorrin-2 (aerobic route): step 3/10. In terms of biological role, methylates precorrin-2 at the C-20 position to produce precorrin-3A. The protein is Cobalamin biosynthesis protein CobIJ (cobIJ) of Mycobacterium bovis (strain ATCC BAA-935 / AF2122/97).